The sequence spans 365 residues: Caffeic acid 3-O-methyltransferase (365 aa).

Residue 130–136 (MNQDKVL) participates in substrate binding. The tract at residues 162–180 (AFEYHGTDPRFNKVFNRGM) is substrate binding. Positions 208, 231, 251, 252, and 265 each coordinate S-adenosyl-L-methionine. The Proton acceptor role is filled by His269.

This sequence belongs to the class I-like SAM-binding methyltransferase superfamily. Cation-independent O-methyltransferase family. COMT subfamily. In terms of assembly, homodimer.

The catalysed reaction is (E)-caffeate + S-adenosyl-L-methionine = (E)-ferulate + S-adenosyl-L-homocysteine + H(+). It functions in the pathway aromatic compound metabolism; phenylpropanoid biosynthesis. Its function is as follows. Catalyzes the conversion of caffeic acid to ferulic acid and of 5-hydroxyferulic acid to sinapic acid. The resulting products may subsequently be converted to the corresponding alcohols that are incorporated into lignins. This chain is Caffeic acid 3-O-methyltransferase (COMT1), found in Prunus dulcis (Almond).